Here is a 321-residue protein sequence, read N- to C-terminus: Cytochrome c biogenesis protein CcsA (321 aa).

A run of 7 helical transmembrane segments spans residues 17–37 (IISI…IVGL), 43–63 (KGMI…WIYS), 71–91 (LYES…VPKI), 143–163 (MLLS…LLVI), 225–245 (VISL…VWAN), 258–273 (ETWA…IYLH), and 286–306 (AIVA…VNLL).

This sequence belongs to the CcmF/CycK/Ccl1/NrfE/CcsA family. As to quaternary structure, may interact with Ccs1.

It localises to the plastid. The protein resides in the chloroplast thylakoid membrane. In terms of biological role, required during biogenesis of c-type cytochromes (cytochrome c6 and cytochrome f) at the step of heme attachment. The polypeptide is Cytochrome c biogenesis protein CcsA (Liriodendron tulipifera (Tuliptree)).